The primary structure comprises 504 residues: Outer capsid protein VP5 (504 aa).

Positions 1–42 (MGKFTSFLKRAGSATKNALTSDAAKRMYKMAGKTLQKVVESE) are involved in membrane permeabilization.

It belongs to the orbivirus VP5 family.

Its subcellular location is the virion. Its function is as follows. VP5 protein is one of the two proteins (with VP2) which constitute the virus particle outer capsid. Acts as a membrane permeabilization protein that mediates release of viral particles from endosomal compartments into the cytoplasm. Permeabilization activity is probably negatively regulated by VP2 and is triggered by endosomal degradation of VP2 and exposure to low pH. The sequence is that of Outer capsid protein VP5 (Segment-6) from African horse sickness virus 6 (AHSV-6).